A 316-amino-acid polypeptide reads, in one-letter code: Acetaldehyde dehydrogenase (316 aa).

An NAD(+)-binding site is contributed by 11–14 (SGNI). The active-site Acyl-thioester intermediate is Cys131. NAD(+)-binding positions include 162–170 (SAGPGTRAN) and Asn289.

This sequence belongs to the acetaldehyde dehydrogenase family. As to quaternary structure, interacts with MhpE.

It catalyses the reaction acetaldehyde + NAD(+) + CoA = acetyl-CoA + NADH + H(+). Its pathway is aromatic compound metabolism; 3-phenylpropanoate degradation. Functionally, catalyzes the conversion of acetaldehyde to acetyl-CoA, using NAD(+) and coenzyme A. Is the final enzyme in the meta-cleavage pathway for the degradation of aromatic compounds. The protein is Acetaldehyde dehydrogenase of Escherichia coli O157:H7.